Consider the following 894-residue polypeptide: Sorting nexin-14 (894 aa).

A PXA domain is found at 78–252 (SSKVDASLSE…LLIIFIDDSP (175 aa)). The region spanning 284-416 (ELKQIREQQD…CHSDEYFRQL (133 aa)) is the RGS domain. The residue at position 496 (Ser496) is a Phosphoserine. Residues 518–638 (PYVDFFEDPS…DFLSPNGGET (121 aa)) enclose the PX domain.

The protein belongs to the sorting nexin family.

Its subcellular location is the cytoplasm. The protein localises to the cell projection. It is found in the dendrite. In terms of biological role, plays a role in maintaining normal neuronal excitability and synaptic transmission. May be involved in several stages of intracellular trafficking. In Pongo abelii (Sumatran orangutan), this protein is Sorting nexin-14 (SNX14).